The following is a 63-amino-acid chain: Large ribosomal subunit protein uL30 (63 aa).

Belongs to the universal ribosomal protein uL30 family. As to quaternary structure, part of the 50S ribosomal subunit.

In Geobacillus stearothermophilus (Bacillus stearothermophilus), this protein is Large ribosomal subunit protein uL30.